Reading from the N-terminus, the 874-residue chain is Alanine--tRNA ligase (874 aa).

Zn(2+) contacts are provided by histidine 562, histidine 566, cysteine 664, and histidine 668.

The protein belongs to the class-II aminoacyl-tRNA synthetase family. Requires Zn(2+) as cofactor.

The protein resides in the cytoplasm. It catalyses the reaction tRNA(Ala) + L-alanine + ATP = L-alanyl-tRNA(Ala) + AMP + diphosphate. In terms of biological role, catalyzes the attachment of alanine to tRNA(Ala) in a two-step reaction: alanine is first activated by ATP to form Ala-AMP and then transferred to the acceptor end of tRNA(Ala). Also edits incorrectly charged Ser-tRNA(Ala) and Gly-tRNA(Ala) via its editing domain. This Shewanella denitrificans (strain OS217 / ATCC BAA-1090 / DSM 15013) protein is Alanine--tRNA ligase.